Reading from the N-terminus, the 335-residue chain is Tryptophan--tRNA ligase (335 aa).

ATP contacts are provided by residues 13 to 15 (QPS) and 21 to 22 (GN). The 'HIGH' region signature appears at 14–22 (PSGNLTIGN). Asp136 contacts L-tryptophan. ATP contacts are provided by residues 148-150 (GQD), Ile187, and 196-200 (KMSKS). A 'KMSKS' region motif is present at residues 196 to 200 (KMSKS).

This sequence belongs to the class-I aminoacyl-tRNA synthetase family. In terms of assembly, homodimer.

Its subcellular location is the cytoplasm. The enzyme catalyses tRNA(Trp) + L-tryptophan + ATP = L-tryptophyl-tRNA(Trp) + AMP + diphosphate + H(+). Its function is as follows. Catalyzes the attachment of tryptophan to tRNA(Trp). The chain is Tryptophan--tRNA ligase from Buchnera aphidicola subsp. Acyrthosiphon pisum (strain APS) (Acyrthosiphon pisum symbiotic bacterium).